The sequence spans 421 residues: 4-hydroxy-3-methylbut-2-en-1-yl diphosphate synthase (flavodoxin) (421 aa).

Residues cysteine 311, cysteine 314, cysteine 357, and glutamate 364 each coordinate [4Fe-4S] cluster.

Belongs to the IspG family. [4Fe-4S] cluster serves as cofactor.

The catalysed reaction is (2E)-4-hydroxy-3-methylbut-2-enyl diphosphate + oxidized [flavodoxin] + H2O + 2 H(+) = 2-C-methyl-D-erythritol 2,4-cyclic diphosphate + reduced [flavodoxin]. Its pathway is isoprenoid biosynthesis; isopentenyl diphosphate biosynthesis via DXP pathway; isopentenyl diphosphate from 1-deoxy-D-xylulose 5-phosphate: step 5/6. In terms of biological role, converts 2C-methyl-D-erythritol 2,4-cyclodiphosphate (ME-2,4cPP) into 1-hydroxy-2-methyl-2-(E)-butenyl 4-diphosphate. In Xanthomonas oryzae pv. oryzae (strain KACC10331 / KXO85), this protein is 4-hydroxy-3-methylbut-2-en-1-yl diphosphate synthase (flavodoxin).